We begin with the raw amino-acid sequence, 491 residues long: Conidiogenone synthase PchP450 (491 aa).

A helical transmembrane segment spans residues 2-22; that stretch reads LLLWFGFFSFVCGLVIYRLQF. Residue C430 coordinates heme.

The protein belongs to the cytochrome P450 family. The cofactor is heme.

It is found in the membrane. It functions in the pathway secondary metabolite biosynthesis; terpenoid biosynthesis. Its function is as follows. Cytochrome P450 monooxygenase; part of the gene cluster that mediates the biosynthesis of conidiogenone, a diterpene known to induce the conidiation. The bifunctional terpene synthase PrDS converts isopentenyl diphosphate (IPP) and dimethylallyl diphosphate (DMAPP) into deoxyconidiogenol. The C-terminal prenyltransferase (PT) domain of PrDS catalyzes formation of GGPP, whereas the N-terminal terpene cyclase (TC) domain catalyzes the cyclization of GGPP into deoxyconidiogenol. The cytochrome P450 monooxygenase PrP450 then catalyzes two rounds of oxidation to furnish conidiogenone. This chain is Conidiogenone synthase PchP450, found in Penicillium rubens (strain ATCC 28089 / DSM 1075 / NRRL 1951 / Wisconsin 54-1255) (Penicillium chrysogenum).